The following is a 123-amino-acid chain: Small ribosomal subunit protein uS13 (123 aa).

The interval 103–123 is disordered; that stretch reads TRTNARTRKGPKKTVGVRRKK. Residues 105-123 show a composition bias toward basic residues; the sequence is TNARTRKGPKKTVGVRRKK.

It belongs to the universal ribosomal protein uS13 family. In terms of assembly, part of the 30S ribosomal subunit. Forms a loose heterodimer with protein S19. Forms two bridges to the 50S subunit in the 70S ribosome.

Its function is as follows. Located at the top of the head of the 30S subunit, it contacts several helices of the 16S rRNA. In the 70S ribosome it contacts the 23S rRNA (bridge B1a) and protein L5 of the 50S subunit (bridge B1b), connecting the 2 subunits; these bridges are implicated in subunit movement. Contacts the tRNAs in the A and P-sites. In Desulforudis audaxviator (strain MP104C), this protein is Small ribosomal subunit protein uS13.